The chain runs to 340 residues: Phenylalanine--tRNA ligase alpha subunit (340 aa).

Glutamate 251 contacts Mg(2+).

This sequence belongs to the class-II aminoacyl-tRNA synthetase family. Phe-tRNA synthetase alpha subunit type 1 subfamily. In terms of assembly, tetramer of two alpha and two beta subunits. It depends on Mg(2+) as a cofactor.

The protein localises to the cytoplasm. The catalysed reaction is tRNA(Phe) + L-phenylalanine + ATP = L-phenylalanyl-tRNA(Phe) + AMP + diphosphate + H(+). The chain is Phenylalanine--tRNA ligase alpha subunit from Porphyromonas gingivalis (strain ATCC 33277 / DSM 20709 / CIP 103683 / JCM 12257 / NCTC 11834 / 2561).